The primary structure comprises 196 residues: Thymidine kinase (196 aa).

17-24 provides a ligand contact to ATP; that stretch reads GPMFAGKT. Glutamate 92 functions as the Proton acceptor in the catalytic mechanism. Residue phenylalanine 121 participates in substrate binding. Zn(2+)-binding residues include cysteine 146 and cysteine 149. 166-170 is a binding site for substrate; it reads LILAG. Residues cysteine 179 and cysteine 182 each contribute to the Zn(2+) site.

This sequence belongs to the thymidine kinase family.

The catalysed reaction is thymidine + ATP = dTMP + ADP + H(+). In terms of biological role, phosphorylates thymidine. ASFV replicates in the cytoplasm of infected cells and contains genes encoding a number of enzymes needed for DNA synthesis, including thymidine kinase. Important for growth in swine macrophages in vitro and is a virus virulence factor in swine. This is Thymidine kinase from Ornithodoros (relapsing fever ticks).